Reading from the N-terminus, the 140-residue chain is Large ribosomal subunit protein uL11 (140 aa).

The protein belongs to the universal ribosomal protein uL11 family. In terms of assembly, part of the ribosomal stalk of the 50S ribosomal subunit. Interacts with L10 and the large rRNA to form the base of the stalk. L10 forms an elongated spine to which L12 dimers bind in a sequential fashion forming a multimeric L10(L12)X complex. One or more lysine residues are methylated.

Forms part of the ribosomal stalk which helps the ribosome interact with GTP-bound translation factors. In Syntrophotalea carbinolica (strain DSM 2380 / NBRC 103641 / GraBd1) (Pelobacter carbinolicus), this protein is Large ribosomal subunit protein uL11.